The primary structure comprises 313 residues: Putative S-adenosyl-L-methionine-dependent methyltransferase MAP_4064c (313 aa).

S-adenosyl-L-methionine contacts are provided by residues Asp129 and 158-159 (DL).

Belongs to the UPF0677 family.

Its function is as follows. Exhibits S-adenosyl-L-methionine-dependent methyltransferase activity. This chain is Putative S-adenosyl-L-methionine-dependent methyltransferase MAP_4064c, found in Mycolicibacterium paratuberculosis (strain ATCC BAA-968 / K-10) (Mycobacterium paratuberculosis).